We begin with the raw amino-acid sequence, 326 residues long: Protease inhibitor (326 aa).

The first 24 residues, Met1–Ala24, serve as a signal peptide directing secretion. 2 consecutive repeat copies span residues Ile177–Ala208 and Val272–Ala304. The tract at residues Ile177–Ala304 is 2 X 32 AA approximate repeats.

Post-translationally, proteolytically cleaved to yield at least three forms (BBRPI-A, -B, and -C).

The protein resides in the secreted. Functionally, shows inhibitory activity towards serine proteases, such as trypsin, chymotrypsin and subtilisin. May form a trypsin-inhibitor complex in a molar ratio of 1:1. The sequence is that of Protease inhibitor from Brevibacillus choshinensis.